The chain runs to 361 residues: uncharacterized protein (361 aa).

The signal sequence occupies residues 1-19; that stretch reads MNLVICVLLLSIWKNNCMT. Topologically, residues 20-47 are extracellular; sequence TNQTNGSSTTGDKPVESMQTKLNYLRRN. Asn-24 carries N-linked (GlcNAc...) asparagine glycosylation. Residues 48-68 traverse the membrane as a helical segment; sequence LLILVGIIIMVFVFICFCYLH. The Cytoplasmic segment spans residues 69 to 361; sequence YNCLSDDASK…QVTSEVTLND (293 aa). The span at 99–113 shows a compositional bias: polar residues; that stretch reads AKTASQCSPETQPML. Disordered stretches follow at residues 99-184, 209-247, and 295-316; these read AKTA…KAHK, PPQL…NPKR, and QNLH…LDSR. The segment covering 114 to 133 has biased composition (low complexity); the sequence is STADKSSDSSSPERASAQSS. Polar residues predominate over residues 141–150; it reads SSLQKPSIPN. A compositionally biased stretch (low complexity) spans 299-308; the sequence is VSSKVKSSSR.

It localises to the membrane. This is an uncharacterized protein from Homo sapiens (Human).